Reading from the N-terminus, the 591-residue chain is L-fucose isomerase (591 aa).

Residues glutamate 337 and aspartate 361 each act as proton acceptor in the active site. Mn(2+)-binding residues include glutamate 337, aspartate 361, and histidine 528.

The protein belongs to the L-fucose isomerase family. As to quaternary structure, homohexamer. Requires Mn(2+) as cofactor.

The protein localises to the cytoplasm. It catalyses the reaction L-fucose = L-fuculose. Its pathway is carbohydrate degradation; L-fucose degradation; L-lactaldehyde and glycerone phosphate from L-fucose: step 1/3. Functionally, converts the aldose L-fucose into the corresponding ketose L-fuculose. This is L-fucose isomerase from Shigella dysenteriae serotype 1 (strain Sd197).